The following is a 101-amino-acid chain: Small ribosomal subunit protein uS14 (101 aa).

Belongs to the universal ribosomal protein uS14 family. In terms of assembly, part of the 30S ribosomal subunit. Contacts proteins S3 and S10.

Functionally, binds 16S rRNA, required for the assembly of 30S particles and may also be responsible for determining the conformation of the 16S rRNA at the A site. The sequence is that of Small ribosomal subunit protein uS14 from Chlamydia caviae (strain ATCC VR-813 / DSM 19441 / 03DC25 / GPIC) (Chlamydophila caviae).